A 560-amino-acid polypeptide reads, in one-letter code: Kinesin light chain 1 (560 aa).

A coiled-coil region spans residues 27-156; the sequence is KTKQVIQGLE…HLEFMNQLKK (130 aa). Positions 156 to 176 are enriched in basic and acidic residues; sequence KYDDDISPSEDKDSDSSKEPL. The tract at residues 156–203 is disordered; the sequence is KYDDDISPSEDKDSDSSKEPLDDLFPNDEDDPGQGIQQQHSSAAAAAQ. Phosphoserine is present on Ser-162. Low complexity predominate over residues 188–203; it reads GQGIQQQHSSAAAAAQ. TPR repeat units lie at residues 213-246, 255-288, 297-330, 339-372, and 381-414; these read LRTL…LEKT, ATML…REKT, AATL…REKV, AKQL…YQTK, and AKTK…AHER. A Phosphotyrosine modification is found at Tyr-449. The residue at position 460 (Ser-460) is a Phosphoserine. Residues 464-497 form a TPR 6 repeat; the sequence is TTTLKNLGALYRRQGKFEAAETLEEAALRSRKQG. 2 positions are modified to phosphoserine: Ser-521 and Ser-524.

It belongs to the kinesin light chain family. Oligomeric complex composed of two heavy chains and two light chains. Interacts with SPAG9. Interacts with ATCAY; may link mitochondria to KLC1 and regulate mitochondria localization into neuron projections. Interacts (via TPR repeats) with TOR1A; the interaction associates TOR1A with the kinesin oligomeric complex. Interacts with BORCS5. Interacts with MAPK8IP3/JIP3 and NTRK2/TRKB; interaction with NTRK2/TRKB is mediated by MAPK8IP3/JIP3. Interacts with CLSTN1; phosphorylation at Ser-460 inhibits interaction with CLSTN1. Post-translationally, phosphorylation at Ser-460 by ERK inhibits interaction with CLSTN1 and localization to cytoplasmic vesicles. As to expression, expressed in brain (at protein level).

It is found in the cell projection. It localises to the growth cone. The protein resides in the cytoplasmic vesicle. The protein localises to the cytoplasm. Its subcellular location is the cytoskeleton. Functionally, kinesin is a microtubule-associated force-producing protein that may play a role in organelle transport. The light chain may function in coupling of cargo to the heavy chain or in the modulation of its ATPase activity. The protein is Kinesin light chain 1 (Klc1) of Rattus norvegicus (Rat).